Consider the following 533-residue polypeptide: Flavin-dependent halogenase armH4 (533 aa).

3 residues coordinate FAD: glycine 16, alanine 19, and glutamate 49. Residues serine 337 and glycine 338 each contribute to the chloride site. Valine 339 contributes to the FAD binding site.

Belongs to the flavin-dependent halogenase family.

It catalyses the reaction melleolide F + FADH2 + chloride + O2 = 6'-chloromelleolide F + FAD + 2 H2O + H(+). The catalysed reaction is melleolide F + bromide + FADH2 + O2 = 6'-bromomelleolide F + FAD + 2 H2O. Functionally, flavin-dependent halogenase involved in the biosynthesis of melleolides, a range of antifungal and phytotoxic polyketide derivatives composed of an orsellinic acid (OA) moiety esterified to various sesquiterpene alcohols. The halogenase catalyzes the transfer of a single chlorine atom to the melleolide backbone, resulting in a 6'-chloromelleolide product. The enzyme acts on free substrate and does not depend on carrier-protein-dependent acceptor molecules. Can also catalyze the transfer of a single bromine atom to the melleolide backbone in vitro. In Armillaria mellea (Honey mushroom), this protein is Flavin-dependent halogenase armH4.